A 37-amino-acid polypeptide reads, in one-letter code: Large ribosomal subunit protein bL36 (37 aa).

It belongs to the bacterial ribosomal protein bL36 family.

The sequence is that of Large ribosomal subunit protein bL36 from Listeria innocua serovar 6a (strain ATCC BAA-680 / CLIP 11262).